The following is a 781-amino-acid chain: Protein translocase subunit SecA 2 (781 aa).

ATP-binding positions include Q85, 103 to 107, and D491; that span reads GEGKT.

It belongs to the SecA family. As to quaternary structure, monomer and homodimer. Part of the essential Sec protein translocation apparatus which comprises SecA, SecYEG and auxiliary proteins SecDF. Other proteins may also be involved.

Its subcellular location is the cell membrane. The protein localises to the cytoplasm. The catalysed reaction is ATP + H2O + cellular proteinSide 1 = ADP + phosphate + cellular proteinSide 2.. In terms of biological role, part of the Sec protein translocase complex. Interacts with the SecYEG preprotein conducting channel. Has a central role in coupling the hydrolysis of ATP to the transfer of proteins into and across the cell membrane, serving as an ATP-driven molecular motor driving the stepwise translocation of polypeptide chains across the membrane. This is Protein translocase subunit SecA 2 from Clostridioides difficile (strain 630) (Peptoclostridium difficile).